A 194-amino-acid chain; its full sequence is ATP-dependent Clp protease proteolytic subunit (194 aa).

The active-site Nucleophile is the Ser98. His123 is a catalytic residue.

It belongs to the peptidase S14 family. In terms of assembly, fourteen ClpP subunits assemble into 2 heptameric rings which stack back to back to give a disk-like structure with a central cavity, resembling the structure of eukaryotic proteasomes.

Its subcellular location is the cytoplasm. The enzyme catalyses Hydrolysis of proteins to small peptides in the presence of ATP and magnesium. alpha-casein is the usual test substrate. In the absence of ATP, only oligopeptides shorter than five residues are hydrolyzed (such as succinyl-Leu-Tyr-|-NHMec, and Leu-Tyr-Leu-|-Tyr-Trp, in which cleavage of the -Tyr-|-Leu- and -Tyr-|-Trp bonds also occurs).. Functionally, cleaves peptides in various proteins in a process that requires ATP hydrolysis. Has a chymotrypsin-like activity. Plays a major role in the degradation of misfolded proteins. The protein is ATP-dependent Clp protease proteolytic subunit of Aliarcobacter butzleri (strain RM4018) (Arcobacter butzleri).